The sequence spans 118 residues: Large ribosomal subunit protein bL19 (118 aa).

This sequence belongs to the bacterial ribosomal protein bL19 family.

In terms of biological role, this protein is located at the 30S-50S ribosomal subunit interface and may play a role in the structure and function of the aminoacyl-tRNA binding site. The chain is Large ribosomal subunit protein bL19 from Onion yellows phytoplasma (strain OY-M).